The chain runs to 200 residues: Mediator of RNA polymerase II transcription subunit 29 (200 aa).

2 stretches are compositionally biased toward low complexity: residues 1 to 20 and 36 to 48; these read MAASQQQASATTSTASVSGP and AQLVGPAQSGLLQ. The tract at residues 1–48 is disordered; it reads MAASQQQASATTSTASVSGPGSAGGSGPQQQPQPPAQLVGPAQSGLLQ. Ala-2 is subject to N-acetylalanine.

It belongs to the Mediator complex subunit 29 family. In terms of assembly, component of the TRAP/SMCC mediator complex. Interacts with MED20/TRFP. Associates with the MED18-MED20 heteromer.

Its subcellular location is the nucleus. Functionally, component of the mediator complex, a complex that can either repress or activate transcription. Mediator complexes are essential for basal and regulated expression of nearly all RNA polymerase II-dependent genes. They may act as a bridge, conveying regulatory information from enhancers and other control elements to the promoter. This chain is Mediator of RNA polymerase II transcription subunit 29 (MED29), found in Bos taurus (Bovine).